The following is a 408-amino-acid chain: UPF0761 membrane protein NMC0462 (408 aa).

Transmembrane regions (helical) follow at residues 43–63 (LLAL…FPVF), 100–120 (LTAI…RTID), 139–159 (FLVY…GISF), 176–196 (WSGA…LWGL), 210–230 (AFVG…LFTW), and 248–268 (VPFF…GAVL).

The protein belongs to the UPF0761 family.

Its subcellular location is the cell inner membrane. The polypeptide is UPF0761 membrane protein NMC0462 (Neisseria meningitidis serogroup C / serotype 2a (strain ATCC 700532 / DSM 15464 / FAM18)).